A 586-amino-acid polypeptide reads, in one-letter code: MLARVTRKMLRHAKCFQRLAIFGSVRALHKDNRTATPQNFSNYESMKQDFKLGIPEYFNFAKDVLDQWTDKEKAGKKPSNPAFWWINRNGEEMRWSFEELGSLSRKFANILSEACSLQRGDRVILILPRVPEWWLANVACLRTGTVLIPGTTQLTQKDILYRLQSSKANCIITNDVLAPAVDAVASKCENLHSKLIVSENSREGWGNLKELMKHASDSHTCVKTKHNEIMAIFFTSGTSGYPKMTAHTHSSFGLGLSVNGRFWLDLTPSDVMWNTSDTGWAKSAWSSVFSPWIQGACVFTHHLPRFEPTSILQTLSKYPITVFCSAPTVYRMLVQNDITSYKFKSLKHCVSAGEPITPDVTEKWRNKTGLDIYEGYGQTETVLICGNFKGMKIKPGSMGKPSPAFDVKIVDVNGNVLPPGQEGDIGIQVLPNRPFGLFTHYVDNPSKTASTLRGNFYITGDRGYMDKDGYFWFVARADDVILSSGYRIGPFEVENALNEHPSVAESAVVSSPDPIRGEVVKAFVVLNPDYKSHDQEQLIKEIQEHVKKTTAPYKYPRKVEFIQELPKTISGKTKRNELRKKEWKTI.

The transit peptide at 1–27 directs the protein to the mitochondrion; sequence MLARVTRKMLRHAKCFQRLAIFGSVRA. N6-succinyllysine occurs at positions 73 and 106. Position 157 is an N6-acetyllysine (lysine 157). ATP is bound by residues 235–243, 374–379, aspartate 461, arginine 476, and lysine 572; these read TSGTSGYPK and EGYGQT.

This sequence belongs to the ATP-dependent AMP-binding enzyme family. Mg(2+) is required as a cofactor. It depends on Mn(2+) as a cofactor.

It is found in the mitochondrion. It localises to the mitochondrion matrix. It carries out the reaction a medium-chain fatty acid + ATP + CoA = a medium-chain fatty acyl-CoA + AMP + diphosphate. The enzyme catalyses propanoate + ATP + CoA = propanoyl-CoA + AMP + diphosphate. The catalysed reaction is butanoate + ATP + CoA = butanoyl-CoA + AMP + diphosphate. It catalyses the reaction 2-methylpropanoate + ATP + CoA = 2-methylpropanoyl-CoA + AMP + diphosphate. It carries out the reaction 2-methylbutanoate + ATP + CoA = 2-methylbutanoyl-CoA + AMP + diphosphate. The enzyme catalyses octanoate + ATP + CoA = octanoyl-CoA + AMP + diphosphate. Functionally, catalyzes the activation of fatty acids by CoA to produce an acyl-CoA, the first step in fatty acid metabolism. Capable of activating medium-chain fatty acids with a preference for isobutyrate among fatty acids with 2-6 carbon atoms. The chain is Acyl-coenzyme A synthetase ACSM3, mitochondrial (ACSM3) from Homo sapiens (Human).